The following is a 37-amino-acid chain: Photosystem I reaction center subunit VIII (37 aa).

The chain crosses the membrane as a helical span at residues 9–29 (SILVTLVGLVFPAFAMASLFL).

It belongs to the PsaI family.

The protein localises to the plastid. It is found in the chloroplast thylakoid membrane. Its function is as follows. May help in the organization of the PsaL subunit. This is Photosystem I reaction center subunit VIII from Pelargonium hortorum (Common geranium).